We begin with the raw amino-acid sequence, 362 residues long: MTDAGKRILVMAGGTGGHVFPALAVAKYLAQQGWQVRWLGTADRMEARLVPQYGFDIDFIDIKGVRGNGLVRKLAAPFKVVRSILQAKAVIAEFKPDVVLGMGGFASGPGGVAAKLAGVPLVLHEQNAIPGMTNKLLSRIANQVLCAFKNTFTQVKAKVVGNPIRRELIALGAEPKQAADDALKVLVVGGSLGAKVFNDLMPEVVAALSKQQSITVWHQVGKDNLTGVKSAYQQQGQEGGVNVAEFIDDMEAAYRWADVVLCRAGALTVSELAAVGLPSILVPYPHAVDDHQTRNAQVLVEAGAAFLLPQAILDVNKLVSKLQLLANDRAELAQMGQRARDVAVLDATEQVAQVCIALAEKG.

UDP-N-acetyl-alpha-D-glucosamine-binding positions include 15–17, Asn-127, Arg-165, Ser-191, Ile-247, 266–271, and Gln-292; these read TGG and ALTVSE.

It belongs to the glycosyltransferase 28 family. MurG subfamily.

Its subcellular location is the cell inner membrane. The catalysed reaction is di-trans,octa-cis-undecaprenyl diphospho-N-acetyl-alpha-D-muramoyl-L-alanyl-D-glutamyl-meso-2,6-diaminopimeloyl-D-alanyl-D-alanine + UDP-N-acetyl-alpha-D-glucosamine = di-trans,octa-cis-undecaprenyl diphospho-[N-acetyl-alpha-D-glucosaminyl-(1-&gt;4)]-N-acetyl-alpha-D-muramoyl-L-alanyl-D-glutamyl-meso-2,6-diaminopimeloyl-D-alanyl-D-alanine + UDP + H(+). It functions in the pathway cell wall biogenesis; peptidoglycan biosynthesis. Functionally, cell wall formation. Catalyzes the transfer of a GlcNAc subunit on undecaprenyl-pyrophosphoryl-MurNAc-pentapeptide (lipid intermediate I) to form undecaprenyl-pyrophosphoryl-MurNAc-(pentapeptide)GlcNAc (lipid intermediate II). This chain is UDP-N-acetylglucosamine--N-acetylmuramyl-(pentapeptide) pyrophosphoryl-undecaprenol N-acetylglucosamine transferase, found in Shewanella sp. (strain ANA-3).